Reading from the N-terminus, the 2104-residue chain is Replication polyprotein (2104 aa).

The next 2 helical transmembrane spans lie at 23-43 (LVAS…FASS) and 70-90 (FNPF…YAFI). The stretch at 289–313 (VRVGEIREKVATLRNKLNTLQTKEL) forms a coiled coil. The SF3 helicase domain occupies 329–501 (LEVLLIEVKV…NKMPKRGAID (173 aa)). The segment at 1499-1520 (GDCGSPIVLASGKKAGKLIGFH) is viral peptidase. One can recognise a RdRp catalytic domain in the interval 1838-1965 (PNYFDADYKN…SVSDEYKDKY (128 aa)).

Specific enzymatic cleavages in vivo yield mature proteins.

It is found in the membrane. It catalyses the reaction RNA(n) + a ribonucleoside 5'-triphosphate = RNA(n+1) + diphosphate. The peptidase activity is involved in polyprotein maturation, possibly along with hosts proteases. Transmembrane protein may be surface viral glycoprotein. RNA-directed RNA polymerase replicates the viral genome. This chain is Replication polyprotein, found in Drosophila melanogaster (Fruit fly).